The sequence spans 575 residues: uncharacterized protein (575 aa).

Its subcellular location is the cytoplasm. It localises to the cytoskeleton. The protein resides in the microtubule organizing center. The protein localises to the spindle pole body. This is an uncharacterized protein from Schizosaccharomyces pombe (strain 972 / ATCC 24843) (Fission yeast).